The following is a 341-amino-acid chain: tRNA N6-adenosine threonylcarbamoyltransferase (341 aa).

Residues histidine 111 and histidine 115 each coordinate Fe cation. Substrate is bound by residues 134-138 (LVSGG), aspartate 167, glycine 180, and asparagine 276. Aspartate 304 contacts Fe cation.

Belongs to the KAE1 / TsaD family. Fe(2+) serves as cofactor.

It is found in the cytoplasm. It carries out the reaction L-threonylcarbamoyladenylate + adenosine(37) in tRNA = N(6)-L-threonylcarbamoyladenosine(37) in tRNA + AMP + H(+). Functionally, required for the formation of a threonylcarbamoyl group on adenosine at position 37 (t(6)A37) in tRNAs that read codons beginning with adenine. Is involved in the transfer of the threonylcarbamoyl moiety of threonylcarbamoyl-AMP (TC-AMP) to the N6 group of A37, together with TsaE and TsaB. TsaD likely plays a direct catalytic role in this reaction. This Pseudomonas aeruginosa (strain ATCC 15692 / DSM 22644 / CIP 104116 / JCM 14847 / LMG 12228 / 1C / PRS 101 / PAO1) protein is tRNA N6-adenosine threonylcarbamoyltransferase.